Here is a 365-residue protein sequence, read N- to C-terminus: Centrosomal protein of 41 kDa B (365 aa).

The segment covering 1 to 14 (MSAKRSIGDPEILK) has biased composition (basic and acidic residues). 2 disordered regions span residues 1-23 (MSAK…NQKY) and 104-123 (EFLT…SKSP). One can recognise a Rhodanese domain in the interval 177–274 (EDCPFLLLDV…ISQKFPQGLT (98 aa)). The tract at residues 329 to 365 (TSTPSRLRLDSRNSKVPSSASSARSLSSTSSHSKPWK) is disordered. The segment covering 342–365 (SKVPSSASSARSLSSTSSHSKPWK) has biased composition (low complexity).

This sequence belongs to the CEP41 family.

Its subcellular location is the cytoplasm. The protein localises to the cytoskeleton. The protein resides in the microtubule organizing center. It localises to the centrosome. It is found in the cell projection. Its subcellular location is the cilium. The protein localises to the cilium basal body. Functionally, required during ciliogenesis for tubulin glutamylation in cilium. Probably acts by participating in the transport of tubulin polyglutamylases between the basal body and the cilium. This chain is Centrosomal protein of 41 kDa B (cep41-b), found in Xenopus laevis (African clawed frog).